Here is an 89-residue protein sequence, read N- to C-terminus: Small ribosomal subunit protein uS14A (89 aa).

Belongs to the universal ribosomal protein uS14 family. In terms of assembly, part of the 30S ribosomal subunit. Contacts proteins S3 and S10.

Binds 16S rRNA, required for the assembly of 30S particles and may also be responsible for determining the conformation of the 16S rRNA at the A site. The chain is Small ribosomal subunit protein uS14A from Bacillus pumilus (strain SAFR-032).